Consider the following 367-residue polypeptide: bZIP transcription factor 18 (367 aa).

Residues 1 to 57 (MEDPSNPQPNQSNLSQCPPLATAPTPAPVRGPYHRRAHSEVQFRLPEDLDLSEPFGG) are disordered. Basic and acidic residues predominate over residues 38-47 (HSEVQFRLPE). S70 carries the phosphoserine modification. The interval 79–124 (SGSGSASDSAGPSAPRSDNPFSAENGGAEAGNSRPRHRHSLSVDGS) is disordered. Low complexity predominate over residues 82 to 96 (GSASDSAGPSAPRSD). One can recognise a bZIP domain in the interval 148 to 211 (DPKRAKRIIA…TGLSSENTEL (64 aa)). Residues 150–171 (KRAKRIIANRQSAARSKERKAR) form a basic motif region. Residues 166 to 245 (KERKARYILE…VERLKFATGE (80 aa)) are a coiled coil. The tract at residues 176–190 (LERKVQTLQTEATTL) is leucine-zipper. Polar residues-rich tracts occupy residues 294 to 309 (QPNN…NPPT), 317 to 328 (ATSNAPAQSHSY), and 354 to 367 (FGRS…SSTM). 2 disordered regions span residues 294 to 330 (QPNN…SYSE) and 343 to 367 (LDIS…SSTM).

In terms of assembly, interacts with NEAP1. Forms homodimer and heterodimer with bZIP34 and bZIP61. As to expression, ubiquitous. Strongly expressed in mature pollen.

Its subcellular location is the nucleus. It localises to the nucleoplasm. The protein localises to the cytoplasm. It is found in the perinuclear region. Transcription factor that may participate with bZIP34 in the gametophytic control of pollen development. This Arabidopsis thaliana (Mouse-ear cress) protein is bZIP transcription factor 18.